The sequence spans 205 residues: GTP cyclohydrolase-2 (205 aa).

49–53 (RLHSE) serves as a coordination point for GTP. The Zn(2+) site is built by C54, C65, and C67. Residues Q70, 92–94 (EGR), and T114 contribute to the GTP site. Catalysis depends on D126, which acts as the Proton acceptor. Residue R128 is the Nucleophile of the active site. Residues T149 and K154 each contribute to the GTP site.

It belongs to the GTP cyclohydrolase II family. Requires Zn(2+) as cofactor.

The catalysed reaction is GTP + 4 H2O = 2,5-diamino-6-hydroxy-4-(5-phosphoribosylamino)-pyrimidine + formate + 2 phosphate + 3 H(+). It functions in the pathway cofactor biosynthesis; riboflavin biosynthesis; 5-amino-6-(D-ribitylamino)uracil from GTP: step 1/4. Catalyzes the conversion of GTP to 2,5-diamino-6-ribosylamino-4(3H)-pyrimidinone 5'-phosphate (DARP), formate and pyrophosphate. The polypeptide is GTP cyclohydrolase-2 (Pseudomonas paraeruginosa (strain DSM 24068 / PA7) (Pseudomonas aeruginosa (strain PA7))).